The following is a 408-amino-acid chain: Eukaryotic initiation factor 4A-II (408 aa).

The interval 1-22 is disordered; sequence MSGGSADYNSREHGGPEGMDPD. The Q motif signature appears at 34-62; it reads DNFDDMNLKESLLRGIYAYGFEKPSAIQQ. The 172-residue stretch at 65–236 folds into the Helicase ATP-binding domain; sequence IIPCIKGYDV…KKFMRDPIRI (172 aa). 77–84 provides a ligand contact to ATP; that stretch reads QAQSGTGK. A Phosphothreonine modification is found at Thr-160. Positions 183-186 match the DEAD box motif; that stretch reads LDEA. One can recognise a Helicase C-terminal domain in the interval 247–408; sequence GIKQFYINVE…EMPMNVADLI (162 aa).

The protein belongs to the DEAD box helicase family. eIF4A subfamily. In terms of assembly, eIF4F is a multi-subunit complex, the composition of which varies with external and internal environmental conditions. It is composed of at least EIF4A, EIF4E and EIF4G1/EIFFG3. Interacts with EIF4E. May interact with NOM1.

It catalyses the reaction ATP + H2O = ADP + phosphate + H(+). ATP-dependent RNA helicase which is a subunit of the eIF4F complex involved in cap recognition and is required for mRNA binding to ribosome. In the current model of translation initiation, eIF4A unwinds RNA secondary structures in the 5'-UTR of mRNAs which is necessary to allow efficient binding of the small ribosomal subunit, and subsequent scanning for the initiator codon. This Macaca fascicularis (Crab-eating macaque) protein is Eukaryotic initiation factor 4A-II (EIF4A2).